The primary structure comprises 142 residues: Large ribosomal subunit protein uL11 (142 aa).

This sequence belongs to the universal ribosomal protein uL11 family. As to quaternary structure, part of the ribosomal stalk of the 50S ribosomal subunit. Interacts with L10 and the large rRNA to form the base of the stalk. L10 forms an elongated spine to which L12 dimers bind in a sequential fashion forming a multimeric L10(L12)X complex. One or more lysine residues are methylated.

In terms of biological role, forms part of the ribosomal stalk which helps the ribosome interact with GTP-bound translation factors. The chain is Large ribosomal subunit protein uL11 from Photorhabdus laumondii subsp. laumondii (strain DSM 15139 / CIP 105565 / TT01) (Photorhabdus luminescens subsp. laumondii).